The sequence spans 302 residues: MDEKRLTHLQQLEAESIHIIREVAAEFENPVMLYSIGKDSSVMLHLARKAFYPGTLPFPLLHVDTGWKFREMYEFRDRTAKNYGFELLVHRNLQGEAMGINPFVHGSAKHTDIMKTEGLKQALDKYGFDAAFGGARRDEEKSRAKERIYSFRDRSHRWDPKNQRPELWRNYNGQINKGESIRVFPLSNWTELDVWQYIYLEQIDIVPLYFAKLRPVLEREGTLIMVDDNRIDLKPGEVISQRKVRFRTLGCWPLTGAVKSDAETLPEIIEEMLISTTSERQGRLIDSDQSASMELKKRQGYF.

It belongs to the PAPS reductase family. CysD subfamily. Heterodimer composed of CysD, the smaller subunit, and CysN.

It carries out the reaction sulfate + ATP + H(+) = adenosine 5'-phosphosulfate + diphosphate. It functions in the pathway sulfur metabolism; hydrogen sulfide biosynthesis; sulfite from sulfate: step 1/3. Functionally, with CysN forms the ATP sulfurylase (ATPS) that catalyzes the adenylation of sulfate producing adenosine 5'-phosphosulfate (APS) and diphosphate, the first enzymatic step in sulfur assimilation pathway. APS synthesis involves the formation of a high-energy phosphoric-sulfuric acid anhydride bond driven by GTP hydrolysis by CysN coupled to ATP hydrolysis by CysD. This is Sulfate adenylyltransferase subunit 2 from Photorhabdus laumondii subsp. laumondii (strain DSM 15139 / CIP 105565 / TT01) (Photorhabdus luminescens subsp. laumondii).